A 209-amino-acid polypeptide reads, in one-letter code: NAD-reducing hydrogenase HoxS subunit delta (209 aa).

Tetramer of an alpha and a gamma subunits (flavin-containing dimer), and a delta and a nickel-containing beta subunits (hydrogenase dimer). [4Fe-4S] cluster serves as cofactor. The cofactor is [3Fe-4S] cluster. Requires [2Fe-2S] cluster as cofactor. It depends on FMN as a cofactor. Ni(2+) is required as a cofactor.

Its subcellular location is the cytoplasm. It catalyses the reaction H2 + NAD(+) = NADH + H(+). This is NAD-reducing hydrogenase HoxS subunit delta (hoxY) from Cupriavidus necator (strain ATCC 17699 / DSM 428 / KCTC 22496 / NCIMB 10442 / H16 / Stanier 337) (Ralstonia eutropha).